The following is a 311-amino-acid chain: Syndecan-1 (311 aa).

Residues 1–22 form the signal peptide; that stretch reads MRRAALWLWLCALALRLQPALL. The Extracellular segment spans residues 23–255; it reads HSVAVNMPPE…GLLDRKEVLG (233 aa). Disordered regions lie at residues 31–85 and 141–244; these read PEDQ…PDAI and TMAP…TGAS. A compositionally biased stretch (acidic residues) spans 32-42; it reads EDQDGSGDDSD. O-linked (Xyl...) (chondroitin sulfate) serine glycosylation is present at Ser37. Asn43 carries an N-linked (GlcNAc...) asparagine glycan. Residues Ser45 and Ser47 are each glycosylated (O-linked (Xyl...) (heparan sulfate) serine). Over residues 71 to 84 the composition is skewed to low complexity; the sequence is TTTATAPEPTSPDA. 2 stretches are compositionally biased toward basic and acidic residues: residues 151-162 and 169-180; these read PHRDVQPDHHET and GRMEPHRPHVEE. 2 O-linked (Xyl...) (chondroitin sulfate) serine glycosylation sites follow: Ser204 and Ser214. Residues 215–226 are compositionally biased toward low complexity; sequence GENAAGAAGEPG. A helical membrane pass occupies residues 256–276; the sequence is GVIAGGLVGLIFAVCLVGFML. At 277–311 the chain is on the cytoplasmic side; it reads YRMKKKDEGSYSLEEPKQANGGAYQKPTKQEEFYA. A disordered region spans residues 285 to 311; the sequence is GSYSLEEPKQANGGAYQKPTKQEEFYA. Ser286 is modified (phosphoserine).

Belongs to the syndecan proteoglycan family. As to quaternary structure, interacts with CDCP1. Interacts (via C-terminus) with TIAM1 (via PDZ domain). Interacts with MDK. In terms of processing, shedding is enhanced by a number of factors such as heparanase, thrombin or EGF. Also by stress and wound healing. PMA-mediated shedding is inhibited by TIMP3.

It localises to the membrane. The protein resides in the secreted. It is found in the extracellular exosome. Its function is as follows. Cell surface proteoglycan that contains both heparan sulfate and chondroitin sulfate and that links the cytoskeleton to the interstitial matrix. Regulates exosome biogenesis in concert with SDCBP and PDCD6IP. Able to induce its own expression in dental mesenchymal cells and also in the neighboring dental epithelial cells via an MSX1-mediated pathway. The sequence is that of Syndecan-1 from Bos taurus (Bovine).